The sequence spans 366 residues: Tubulin-like protein CetZ (366 aa).

Residues 10–14, 103–105, Glu-136, Asn-163, and Asn-181 contribute to the GTP site; these read QCGTK and GTG.

It belongs to the CetZ family.

It localises to the cytoplasm. Functionally, involved in cell shape control. The protein is Tubulin-like protein CetZ of Pyrococcus furiosus (strain ATCC 43587 / DSM 3638 / JCM 8422 / Vc1).